The chain runs to 1024 residues: Protein translocase subunit SecA (1024 aa).

ATP contacts are provided by residues Gln143, 161 to 165, and Asp661; that span reads GEGKT. The tract at residues 970–1024 is disordered; that stretch reads HEEAGSVYNAQPDGEPESQASKQQPVVADHSKPGRNDLCPCGSGKKYKNCHGREA. Residues Cys1008, Cys1010, Cys1019, and His1020 each coordinate Zn(2+). Positions 1014-1024 are enriched in basic residues; that stretch reads KKYKNCHGREA.

Belongs to the SecA family. In terms of assembly, monomer and homodimer. Part of the essential Sec protein translocation apparatus which comprises SecA, SecYEG and auxiliary proteins SecDF. Other proteins may also be involved. Zn(2+) serves as cofactor.

Its subcellular location is the cell inner membrane. It is found in the cytoplasm. The enzyme catalyses ATP + H2O + cellular proteinSide 1 = ADP + phosphate + cellular proteinSide 2.. Part of the Sec protein translocase complex. Interacts with the SecYEG preprotein conducting channel. Has a central role in coupling the hydrolysis of ATP to the transfer of proteins into and across the cell membrane, serving as an ATP-driven molecular motor driving the stepwise translocation of polypeptide chains across the membrane. This Chlorobium luteolum (strain DSM 273 / BCRC 81028 / 2530) (Pelodictyon luteolum) protein is Protein translocase subunit SecA.